Reading from the N-terminus, the 96-residue chain is Large ribosomal subunit protein eL21 (96 aa).

A disordered region spans residues 1 to 22 (MRKSKGFKSRSRYKLKRSIRPK).

This sequence belongs to the eukaryotic ribosomal protein eL21 family.

The chain is Large ribosomal subunit protein eL21 from Methanosphaera stadtmanae (strain ATCC 43021 / DSM 3091 / JCM 11832 / MCB-3).